Here is a 177-residue protein sequence, read N- to C-terminus: Large ribosomal subunit protein uL6 (177 aa).

It belongs to the universal ribosomal protein uL6 family. In terms of assembly, part of the 50S ribosomal subunit.

In terms of biological role, this protein binds to the 23S rRNA, and is important in its secondary structure. It is located near the subunit interface in the base of the L7/L12 stalk, and near the tRNA binding site of the peptidyltransferase center. The protein is Large ribosomal subunit protein uL6 of Aeromonas hydrophila subsp. hydrophila (strain ATCC 7966 / DSM 30187 / BCRC 13018 / CCUG 14551 / JCM 1027 / KCTC 2358 / NCIMB 9240 / NCTC 8049).